A 353-amino-acid polypeptide reads, in one-letter code: Phospho-N-acetylmuramoyl-pentapeptide-transferase (353 aa).

The next 10 membrane-spanning stretches (helical) occupy residues 24-44 (LGFF…ILWA), 66-86 (TPTM…VLCA), 88-108 (LGNL…FVGF), 129-149 (FGML…KGLD), 160-180 (PLFE…FLST), 192-212 (GLAS…VYVA), 229-249 (VGEL…FLWY), 256-276 (VFMG…NAIV), 281-301 (ILLV…ILQV), and 330-350 (KVIV…LLSL).

This sequence belongs to the glycosyltransferase 4 family. MraY subfamily. Requires Mg(2+) as cofactor.

Its subcellular location is the cell inner membrane. It catalyses the reaction UDP-N-acetyl-alpha-D-muramoyl-L-alanyl-gamma-D-glutamyl-meso-2,6-diaminopimeloyl-D-alanyl-D-alanine + di-trans,octa-cis-undecaprenyl phosphate = di-trans,octa-cis-undecaprenyl diphospho-N-acetyl-alpha-D-muramoyl-L-alanyl-D-glutamyl-meso-2,6-diaminopimeloyl-D-alanyl-D-alanine + UMP. It participates in cell wall biogenesis; peptidoglycan biosynthesis. Its function is as follows. Catalyzes the initial step of the lipid cycle reactions in the biosynthesis of the cell wall peptidoglycan: transfers peptidoglycan precursor phospho-MurNAc-pentapeptide from UDP-MurNAc-pentapeptide onto the lipid carrier undecaprenyl phosphate, yielding undecaprenyl-pyrophosphoryl-MurNAc-pentapeptide, known as lipid I. The sequence is that of Phospho-N-acetylmuramoyl-pentapeptide-transferase from Helicobacter pylori (strain HPAG1).